A 289-amino-acid polypeptide reads, in one-letter code: Zinc finger matrin-type protein 3 (289 aa).

The disordered stretch occupies residues 1 to 42; sequence MILLQHAVLPPPKQPSPSPPMSVATRSTGTLQLPPQKPFGQE. Residues 9-20 show a composition bias toward pro residues; sequence LPPPKQPSPSPP. The span at 24 to 33 shows a compositional bias: polar residues; it reads ATRSTGTLQL. 2 Matrin-type zinc fingers span residues 70–100 and 147–177; these read LYCKLCNVTLNSAQQAQAHYQGKNHGKKLRN and DYCKLCDASFSSPAVAQAHYQGKNHAKRLRL. The span at 180-191 shows a compositional bias: polar residues; it reads AQSNSFSESSEL. Residues 180 to 201 form a disordered region; it reads AQSNSFSESSELGQRRARKEGN. Residues 246–276 form a Matrin-type 3 zinc finger; it reads FYCSMCNVGAGEEMEFRQHLESKQHKSKVSE.

In terms of assembly, interacts with dsRNA. In terms of tissue distribution, highly expressed in adult brain, and moderately in adult kidney and testis. Not detected in fetal brain, heart, pancreas, adrenal gland, liver or small intestine.

The protein resides in the nucleus. Its subcellular location is the nucleolus. In terms of biological role, acts as a bona fide target gene of p53/TP53. May play a role in the TP53-dependent growth regulatory pathway. May contribute to TP53-mediated apoptosis by regulation of TP53 expression and translocation to the nucleus and nucleolus. The chain is Zinc finger matrin-type protein 3 from Homo sapiens (Human).